Reading from the N-terminus, the 566-residue chain is Peroxisomal targeting signal receptor (566 aa).

A Glycyl cysteine thioester (Cys-Gly) (interchain with G-Cter in ubiquitin) cross-link involves residue cysteine 5. An amphipathic helix 1 (AH1) region spans residues 6–28 (SVGSNPLAQLNKHAQQNPALRQV). Lysine 17 is covalently cross-linked (Glycyl lysine isopeptide (Lys-Gly) (interchain with G-Cter in ubiquitin)). An amphipathic helix 2 (AH2) region spans residues 53–71 (RFQMDQFMNRSPGFSDGQL). A disordered region spans residues 88 to 159 (GLKKQDSGSS…IGRPMMHTGI (72 aa)). The segment covering 94–142 (SGSSNMSAGDTAQHSRSWGNEFNSRSPQQGLASRVNNVERISNTNSMSS) has biased composition (polar residues). Residues 111 to 115 (WGNEF) carry the WxxxF/Y motif 1 motif. Positions 145–151 (PGMSRIG) are amphipathic helix 3 (AH3). The short motif at 187–191 (WNEQF) is the WxxxF/Y motif 2 element. The amphipathic helix 4 (AH4) stretch occupies residues 225–241 (FQEVWDKLQAETADNNL). The short motif at 248–252 (WEKDY) is the WxxxF/Y motif 3 element. 5 TPR repeats span residues 277–311 (NPNA…DPAH), 312–345 (VDAW…DPTN), 416–449 (PEVQ…NPND), 451–483 (LMWN…KPSF), and 485–517 (RARY…HEVE).

The protein belongs to the peroxisomal targeting signal receptor family. In terms of assembly, interacts (via WxxxF/Y and LVxEF motifs) with PEX14; promoting translocation through the PEX13-PEX14 docking complex. In terms of processing, monoubiquitinated at Cys-5 by PEX2 during PEX5 passage through the retrotranslocation channel: monoubiquitination acts as a signal for PEX5 extraction and is required for proper export from peroxisomes and recycling. When PEX5 recycling is compromised, polyubiquitinated at Lys-17 by PEX10 during its passage through the retrotranslocation channel, leading to its degradation.

It is found in the cytoplasm. It localises to the cytosol. The protein localises to the peroxisome matrix. Receptor that mediates peroxisomal import of proteins containing a C-terminal PTS1-type tripeptide peroxisomal targeting signal (SKL-type). Binds to cargo proteins containing a PTS1 peroxisomal targeting signal in the cytosol, and translocates them into the peroxisome matrix by passing through the PEX13-PEX14 docking complex along with cargo proteins. PEX5 receptor is then retrotranslocated into the cytosol, leading to release of bound cargo in the peroxisome matrix, and reset for a subsequent peroxisome import cycle. This Kluyveromyces lactis (strain ATCC 8585 / CBS 2359 / DSM 70799 / NBRC 1267 / NRRL Y-1140 / WM37) (Yeast) protein is Peroxisomal targeting signal receptor (PEX5).